Reading from the N-terminus, the 373-residue chain is Anhydro-N-acetylmuramic acid kinase (373 aa).

Residue Gly-13–Asp-20 coordinates ATP.

Belongs to the anhydro-N-acetylmuramic acid kinase family.

It carries out the reaction 1,6-anhydro-N-acetyl-beta-muramate + ATP + H2O = N-acetyl-D-muramate 6-phosphate + ADP + H(+). It participates in amino-sugar metabolism; 1,6-anhydro-N-acetylmuramate degradation. The protein operates within cell wall biogenesis; peptidoglycan recycling. Functionally, catalyzes the specific phosphorylation of 1,6-anhydro-N-acetylmuramic acid (anhMurNAc) with the simultaneous cleavage of the 1,6-anhydro ring, generating MurNAc-6-P. Is required for the utilization of anhMurNAc either imported from the medium or derived from its own cell wall murein, and thus plays a role in cell wall recycling. The polypeptide is Anhydro-N-acetylmuramic acid kinase (Brucella suis (strain ATCC 23445 / NCTC 10510)).